The chain runs to 139 residues: uncharacterized protein (139 aa).

The first 32 residues, 1 to 32 (MEFHDDKKNELQKKEEIITEAIDTLFQSSAFG), serve as a signal peptide directing secretion. In terms of domain architecture, sHSP spans 44–139 (SSLKDVQTTI…TLFFPKNKHE (96 aa)).

This sequence belongs to the small heat shock protein (HSP20) family.

This is an uncharacterized protein from Bacillus subtilis (strain 168).